A 435-amino-acid chain; its full sequence is Estrogen-related receptor gamma (435 aa).

Residues 1 to 64 (MSNKDRHIDS…GLDSPPLYPS (64 aa)) form a disordered region. Residues 10 to 29 (SSCSSFIKTEPSSPASLTDS) show a composition bias toward polar residues. Over residues 34–47 (SPGGSSDASGSYSS) the composition is skewed to low complexity. The nuclear receptor DNA-binding region spans 102 to 177 (KRLCLVCGDI…VGMLKEGVRL (76 aa)). 2 NR C4-type zinc fingers span residues 105–125 (CLVCGDIASGYHYGVASCEAC) and 141–160 (CPATNECEITKRRRKSCQAC). The NR LBD domain maps to 210–434 (PYNKIVSHLL…KLFSEMLEAK (225 aa)).

Belongs to the nuclear hormone receptor family. NR3 subfamily. Homodimer. Interacts with NRIP1, NCOA1 and NCOR2. Binds TLE1, PNRC1 and PNRC2. Binds GRIP1. Acetylated by PCAF/KAT2 (in vitro).

It is found in the nucleus. Functionally, orphan receptor that acts as a transcription activator in the absence of bound ligand. Binds specifically to an estrogen response element and activates reporter genes controlled by estrogen response elements. Induces the expression of PERM1 in the skeletal muscle. This Pongo abelii (Sumatran orangutan) protein is Estrogen-related receptor gamma (ESRRG).